The chain runs to 596 residues: MKHIRNFSIIAHIDHGKSTLSDRLIQVCGGLSDREMDAQVLDSMDLERERGITIKAQSVTLEYKAKNGEIYQLNFIDTPGHVDFSYEVSRSLAACEGALLVVDAGQGVEAQTLANCYTALDMNLDVVPILNKIDLPQADPERVAAEIEDIVGIDAMNAVRCSAKTGVGIDDVLEVIVEQIPPPEGNPDAPLQALIIDSWFDSYLGVVSLVRIKHGVLKKGDKFKVMSTGQNHTADRVGIFTPKQTDKTELKTGEVGFVIAGIKEIHGAPVGDTLTLAKNGADKPLPGFKKVKPQVYAGVFPISTDEYENFRDALNKLSLNDASLFFEPESSSALGFGFRIGYLGLLHMEIIQERLEREYDLDLITTAPTVVYEVLMTSGETIYVDNPADLPAINNIEEMREPIVEANILVPKEYLGNVITLCIEKRGTQVNMVYHGNQVAVTYHLPMAEVVMDFFDRLKSTSRGYASLEYNFIRFDPADMVRLDILINGDRVDALAMIIHRSNIRHRGLALVEKMKELIPRQMFDIAIQAAVGSQIIARSTVKALRKDVTAKCYGGDVSRKKKLLNKQKEGKKRMKQVGNVEVPQEAFLAVLKLNE.

The 183-residue stretch at 2–184 (KHIRNFSIIA…VIVEQIPPPE (183 aa)) folds into the tr-type G domain. GTP-binding positions include 14–19 (DHGKST) and 131–134 (NKID).

The protein belongs to the TRAFAC class translation factor GTPase superfamily. Classic translation factor GTPase family. LepA subfamily.

The protein resides in the cell inner membrane. The enzyme catalyses GTP + H2O = GDP + phosphate + H(+). In terms of biological role, required for accurate and efficient protein synthesis under certain stress conditions. May act as a fidelity factor of the translation reaction, by catalyzing a one-codon backward translocation of tRNAs on improperly translocated ribosomes. Back-translocation proceeds from a post-translocation (POST) complex to a pre-translocation (PRE) complex, thus giving elongation factor G a second chance to translocate the tRNAs correctly. Binds to ribosomes in a GTP-dependent manner. The polypeptide is Elongation factor 4 (Shewanella oneidensis (strain ATCC 700550 / JCM 31522 / CIP 106686 / LMG 19005 / NCIMB 14063 / MR-1)).